Consider the following 348-residue polypeptide: Nuclear receptor subfamily 1 group I member 3 (348 aa).

The segment at residues 8 to 83 (PRSCMVCGDR…AGMKKEMILS (76 aa)) is a DNA-binding region (nuclear receptor). The NR C4-type zinc-finger motif lies at 11-31 (CMVCGDRATGYHFHALTCEGC). Residue Thr38 is modified to Phosphothreonine; by PKC. An NR C4-type zinc finger spans residues 47-71 (CPFAGSCKVNKAQRRHCPACRLQKC). An NR LBD domain is found at 109 to 348 (GQQELVQTLL…MMPLLQEICS (240 aa)).

This sequence belongs to the nuclear hormone receptor family. NR1 subfamily. In terms of assembly, heterodimer of NR1I3 and RXR. Interacts with PSMC4. Interacts with ECT2. Directly interacts with DNAJC7; this complex may also include HSP90. Interacts with CRY1. Interacts with CRY2 in a ligand-dependent manner. Post-translationally, phosphorylated at Thr-38 by PKC, dephosphorylation of Thr-38 is required for nuclear translocation and activation.

It is found in the nucleus. Its subcellular location is the cytoplasm. It localises to the cytoskeleton. Its function is as follows. Binds and transactivates the retinoic acid response elements that control expression of the retinoic acid receptor beta 2 and alcohol dehydrogenase 3 genes. Transactivates both the phenobarbital responsive element module of the human CYP2B6 gene and the CYP3A4 xenobiotic response element. This is Nuclear receptor subfamily 1 group I member 3 (NR1I3) from Pusa sibirica (Baikal seal).